The chain runs to 282 residues: Bifunctional protein FolD (282 aa).

Residues 165-167 (GAS) and I231 contribute to the NADP(+) site.

It belongs to the tetrahydrofolate dehydrogenase/cyclohydrolase family. As to quaternary structure, homodimer.

It carries out the reaction (6R)-5,10-methylene-5,6,7,8-tetrahydrofolate + NADP(+) = (6R)-5,10-methenyltetrahydrofolate + NADPH. It catalyses the reaction (6R)-5,10-methenyltetrahydrofolate + H2O = (6R)-10-formyltetrahydrofolate + H(+). Its pathway is one-carbon metabolism; tetrahydrofolate interconversion. In terms of biological role, catalyzes the oxidation of 5,10-methylenetetrahydrofolate to 5,10-methenyltetrahydrofolate and then the hydrolysis of 5,10-methenyltetrahydrofolate to 10-formyltetrahydrofolate. The chain is Bifunctional protein FolD from Francisella tularensis subsp. novicida (strain U112).